We begin with the raw amino-acid sequence, 129 residues long: Tumor necrosis factor receptor superfamily member 12A (129 aa).

The signal sequence occupies residues Met1 to Gly27. Over Glu28–Pro80 the chain is Extracellular. 3 disulfides stabilise this stretch: Cys36–Cys49, Cys52–Cys67, and Cys55–Cys64. A TNFR-Cys; atypical repeat occupies Cys36 to Cys67. The helical transmembrane segment at Ile81–Trp101 threads the bilayer. Residues Arg102–Gln129 are Cytoplasmic-facing.

Associates with TRAF1 and TRAF2, and probably also with TRAF3. As to expression, highly expressed in fetal heart, intestine, kidney, liver, lung and skin, and in adult heart and ovary. Intermediate expression in adult kidney, lung and skin.

The protein localises to the membrane. Receptor for TNFSF12/TWEAK. Weak inducer of apoptosis in some cell types. Promotes angiogenesis and the proliferation of endothelial cells. May modulate cellular adhesion to matrix proteins. The polypeptide is Tumor necrosis factor receptor superfamily member 12A (Tnfrsf12a) (Mus musculus (Mouse)).